Reading from the N-terminus, the 639-residue chain is Probable endo-1,3(4)-beta-glucanase ACLA_073210 (639 aa).

Residues 1-21 (MAPSSLLLSVGSLIASSLASA) form the signal peptide. A GH16 domain is found at 26–290 (IREQSQSYQL…WAGNVFGESG (265 aa)). Asn65 carries an N-linked (GlcNAc...) asparagine glycan. Glu146 acts as the Nucleophile in catalysis. The active-site Proton donor is the Glu151. Disordered stretches follow at residues 337–384 (TVAS…TVAE) and 442–545 (QSSS…GSSI). The segment covering 339 to 348 (ASPNTASEVH) has biased composition (polar residues). Low complexity-rich tracts occupy residues 362–376 (PTVP…VPPA) and 478–488 (TTTEAVAETET). Ala617 carries the GPI-anchor amidated alanine lipid modification. Positions 618–639 (GARKLSVGLSGLVGALAVAALA) are cleaved as a propeptide — removed in mature form.

Belongs to the glycosyl hydrolase 16 family.

The protein resides in the cell membrane. It carries out the reaction Endohydrolysis of (1-&gt;3)- or (1-&gt;4)-linkages in beta-D-glucans when the glucose residue whose reducing group is involved in the linkage to be hydrolyzed is itself substituted at C-3.. In terms of biological role, mixed-linked glucanase involved in the degradation of complex natural cellulosic substrates. This Aspergillus clavatus (strain ATCC 1007 / CBS 513.65 / DSM 816 / NCTC 3887 / NRRL 1 / QM 1276 / 107) protein is Probable endo-1,3(4)-beta-glucanase ACLA_073210.